We begin with the raw amino-acid sequence, 996 residues long: Alanine--tRNA ligase, chloroplastic/mitochondrial (996 aa).

Residues His677, His681, Cys779, and His783 each contribute to the Zn(2+) site.

This sequence belongs to the class-II aminoacyl-tRNA synthetase family. In terms of assembly, monomer. Zn(2+) is required as a cofactor.

Its subcellular location is the plastid. It is found in the chloroplast. The protein resides in the mitochondrion. It catalyses the reaction tRNA(Ala) + L-alanine + ATP = L-alanyl-tRNA(Ala) + AMP + diphosphate. Catalyzes the attachment of alanine to tRNA(Ala) in a two-step reaction: alanine is first activated by ATP to form Ala-AMP and then transferred to the acceptor end of tRNA(Ala). Also edits incorrectly charged tRNA(Ala) via its editing domain. The chain is Alanine--tRNA ligase, chloroplastic/mitochondrial from Oryza sativa subsp. japonica (Rice).